The primary structure comprises 418 residues: MLPRKLKIDSTELAEITNELVQFLNCLVLRSGGLKKEHIWVRNGRILDERTVFFEEKTMADVQIDCEGLILSPGFIDLQLNGGFGIDFSTYNSDDKEYQEGLALVAKQLLAHGVTSFSPTVITSSPETYHKILPLLKPSNASSEGAGNLGAHLEGPFISADKRGCHPEQLVITSLSPNPVEIIEHVYGSTENIAIVTMAPELEGAQEAIEYFVSTGTTVSVGHSSAKLGPGEMAVLSGAKMITHLFNAMQSYHHRDPGLIGLLTSSKLTPDHPLYYGIISDGIHTHDSALRIAYHTNSAGLVLVTDAIAALGMSDGVHKLGTQTIHVKGLEAKLDGTNTTAGSVASMPYCIRHLMKATGCPIEFALQSATHKPATLLGVSDEKGTLDVGRLADFVLIDKNVTVKATFCSGKRVFLAQD.

A divalent metal cation is bound at residue Glu-154. 165–166 provides a ligand contact to substrate; that stretch reads CH. A divalent metal cation is bound by residues His-223 and His-244. Residues 247 to 248, Arg-255, and 281 to 284 contribute to the substrate site; these read NA and DGIH. Asp-306 (proton donor/acceptor) is an active-site residue. 340–342 is a substrate binding site; that stretch reads TAG.

This sequence belongs to the metallo-dependent hydrolases superfamily. NagA family. A divalent metal cation is required as a cofactor.

The enzyme catalyses N-acetyl-D-glucosamine 6-phosphate + H2O = D-glucosamine 6-phosphate + acetate. The chain is N-acetylglucosamine-6-phosphate deacetylase from Caenorhabditis elegans.